The primary structure comprises 733 residues: Zinc finger transcription factor ace1 (733 aa).

The span at 1 to 11 shows a compositional bias: basic residues; the sequence is MSFSNPRRRTP. Disordered stretches follow at residues 1 to 22, 34 to 63, and 89 to 183; these read MSFSNPRRRTPVTRPGTDCEHG, GATFHSPTSPSASSAAGDFVPPTLTRSQSA, and ASLS…SSTT. The segment covering 39–49 has biased composition (low complexity); sequence SPTSPSASSAA. The span at 132–142 shows a compositional bias: basic residues; it reads LRPRSVRRTRN. Positions 148-158 are enriched in polar residues; it reads GIGSSVVSTND. The segment covering 171-183 has biased composition (low complexity); sequence ASALTRSAASSTT. 3 consecutive C2H2-type zinc fingers follow at residues 400–424, 428–456, and 463–488; these read KKCREPGCTKEFKRPCDLTKHEKTH, WKCPIPTCKYHEYGWPTEKEMDRHINDKH, and YECLFKPCPYKSKRESNCKQHMEKAH. Positions 497 to 533 are disordered; the sequence is TNGKKAPSQNGSTAQQTPPLANVSTPSSTPSYSVPTP. Residues 503-515 are compositionally biased toward polar residues; it reads PSQNGSTAQQTPP. The segment covering 519–530 has biased composition (low complexity); it reads VSTPSSTPSYSV.

Its subcellular location is the nucleus. In terms of biological role, binds to the promoter of the cbh1 gene and activates transcription. The protein is Zinc finger transcription factor ace1 (ace1) of Hypocrea jecorina (Trichoderma reesei).